A 500-amino-acid polypeptide reads, in one-letter code: ERAD-associated E3 ubiquitin-protein ligase HRD1 (500 aa).

Residues Met-1–Arg-3 lie on the Cytoplasmic side of the membrane. Residues Leu-4–Ser-24 traverse the membrane as a helical segment. At Ser-25–Lys-40 the chain is on the lumenal side. The chain crosses the membrane as a helical span at residues Ile-41 to Val-61. Residues Lys-62–Asp-98 lie on the Cytoplasmic side of the membrane. A helical membrane pass occupies residues Phe-99 to Leu-119. Residues Ala-120–Met-135 are Lumenal-facing. Residues Leu-136–Leu-156 traverse the membrane as a helical segment. Over Ser-157 to Ser-170 the chain is Cytoplasmic. A helical membrane pass occupies residues Val-171–Val-191. Topologically, residues Lys-192 to Leu-225 are lumenal. Residues Ser-226–Ile-246 form a helical membrane-spanning segment. Residues Arg-247–Asp-500 lie on the Cytoplasmic side of the membrane. An RING-type; atypical zinc finger spans residues Cys-292–Arg-330. 2 disordered regions span residues Asp-337–Gln-375 and Asn-398–Thr-438. Residues Val-348–Asn-358 are compositionally biased toward low complexity. Over residues Asn-398–Pro-426 the composition is skewed to polar residues.

Belongs to the HRD1 family.

The protein localises to the endoplasmic reticulum membrane. The enzyme catalyses S-ubiquitinyl-[E2 ubiquitin-conjugating enzyme]-L-cysteine + [acceptor protein]-L-lysine = [E2 ubiquitin-conjugating enzyme]-L-cysteine + N(6)-ubiquitinyl-[acceptor protein]-L-lysine.. Its pathway is protein modification; protein ubiquitination. Functionally, probable component of the HRD1 ubiquitin ligase complex that mediates the rapid degradation of misfolded endoplasmic reticulum (ER) proteins, a process called ER-associated degradation (ERAD). The sequence is that of ERAD-associated E3 ubiquitin-protein ligase HRD1 from Oryza sativa subsp. japonica (Rice).